We begin with the raw amino-acid sequence, 134 residues long: L-ectoine synthase (134 aa).

Belongs to the ectoine synthase family.

The catalysed reaction is (2S)-4-acetamido-2-aminobutanoate = L-ectoine + H2O. It functions in the pathway amine and polyamine biosynthesis; ectoine biosynthesis; L-ectoine from L-aspartate 4-semialdehyde: step 3/3. Its function is as follows. Catalyzes the circularization of gamma-N-acetyl-alpha,gamma-diaminobutyric acid (ADABA) to ectoine (1,4,5,6-tetrahydro-2-methyl-4-pyrimidine carboxylic acid), which is an excellent osmoprotectant. The chain is L-ectoine synthase from Thermobifida fusca (strain YX).